The primary structure comprises 232 residues: Vacuolar iron transporter homolog 1 (232 aa).

At Met-1–Arg-59 the chain is on the cytoplasmic side. The helical transmembrane segment at Ala-60–Gly-80 threads the bilayer. Residues Ala-81–Met-89 are Vacuolar-facing. A helical membrane pass occupies residues Leu-90 to Val-110. The Cytoplasmic segment spans residues Ser-111–Ala-148. A helical membrane pass occupies residues Val-149–Val-169. Topologically, residues Arg-170–Arg-175 are vacuolar. A helical transmembrane segment spans residues Val-176–Tyr-196. Residues Leu-197 to Arg-208 lie on the Cytoplasmic side of the membrane. A helical membrane pass occupies residues Met-209 to Met-229. Residues His-230–Val-232 lie on the Vacuolar side of the membrane.

The protein belongs to the CCC1 family.

Its subcellular location is the vacuole membrane. It carries out the reaction Fe(2+)(in) = Fe(2+)(out). Probable vacuolar iron transporter that may be involved in the regulation of iron distribution throughout the plant. This chain is Vacuolar iron transporter homolog 1, found in Oryza sativa subsp. japonica (Rice).